Consider the following 89-residue polypeptide: MTLNTQEKQKLINTHQNHGTDTGSAEVQVAMLSERISKLSNHLQKNIHDFSSRQGLLKMIGQRKRLLNYLRDKSNKRYTDIITKLKLRG.

The tract at residues 1 to 23 (MTLNTQEKQKLINTHQNHGTDTG) is disordered.

This sequence belongs to the universal ribosomal protein uS15 family. Part of the 30S ribosomal subunit. Forms a bridge to the 50S subunit in the 70S ribosome, contacting the 23S rRNA.

In terms of biological role, one of the primary rRNA binding proteins, it binds directly to 16S rRNA where it helps nucleate assembly of the platform of the 30S subunit by binding and bridging several RNA helices of the 16S rRNA. Functionally, forms an intersubunit bridge (bridge B4) with the 23S rRNA of the 50S subunit in the ribosome. This Prochlorococcus marinus (strain MIT 9211) protein is Small ribosomal subunit protein uS15.